An 85-amino-acid polypeptide reads, in one-letter code: uncharacterized protein (85 aa).

The disordered stretch occupies residues 44-85 (EAHPSEHNGTVPRSLSQEWAKILAEEAEENSEENNDESEEDN). Over residues 50–60 (HNGTVPRSLSQ) the composition is skewed to polar residues. A compositionally biased stretch (acidic residues) spans 68-85 (EEAEENSEENNDESEEDN).

This is an uncharacterized protein from Haloarcula hispanica (His1V).